The primary structure comprises 498 residues: ATP synthase subunit beta, chloroplastic (498 aa).

172-179 (GGAGVGKT) contributes to the ATP binding site.

The protein belongs to the ATPase alpha/beta chains family. As to quaternary structure, F-type ATPases have 2 components, CF(1) - the catalytic core - and CF(0) - the membrane proton channel. CF(1) has five subunits: alpha(3), beta(3), gamma(1), delta(1), epsilon(1). CF(0) has four main subunits: a(1), b(1), b'(1) and c(9-12).

The protein resides in the plastid. It localises to the chloroplast thylakoid membrane. The enzyme catalyses ATP + H2O + 4 H(+)(in) = ADP + phosphate + 5 H(+)(out). In terms of biological role, produces ATP from ADP in the presence of a proton gradient across the membrane. The catalytic sites are hosted primarily by the beta subunits. In Agapanthus africanus (Lily of the Nile), this protein is ATP synthase subunit beta, chloroplastic.